A 277-amino-acid chain; its full sequence is Ubiquinone biosynthesis protein COQ4, mitochondrial (277 aa).

The transit peptide at 1–14 (MLTKRALRTTDPYR) directs the protein to the mitochondrion. Zn(2+)-binding residues include histidine 157, aspartate 158, histidine 161, and glutamate 173.

Belongs to the COQ4 family. In terms of assembly, component of a multi-subunit COQ enzyme complex, composed of at least COQ3, COQ4, COQ5, COQ6, COQ7 and COQ9. The cofactor is Zn(2+).

It localises to the mitochondrion inner membrane. It catalyses the reaction a 4-hydroxy-3-methoxy-5-(all-trans-polyprenyl)benzoate + H(+) = a 2-methoxy-6-(all-trans-polyprenyl)phenol + CO2. It participates in cofactor biosynthesis; ubiquinone biosynthesis. In terms of biological role, lyase that catalyzes the C1-decarboxylation of 4-hydroxy-3-methoxy-5-(all-trans-polyprenyl)benzoic acid into 2-methoxy-6-(all-trans-polyprenyl)phenol during ubiquinone biosynthesis. The protein is Ubiquinone biosynthesis protein COQ4, mitochondrial of Ajellomyces capsulatus (strain NAm1 / WU24) (Darling's disease fungus).